The primary structure comprises 179 residues: Large ribosomal subunit protein uL5 (179 aa).

This sequence belongs to the universal ribosomal protein uL5 family. Part of the 50S ribosomal subunit; part of the 5S rRNA/L5/L18/L25 subcomplex. Contacts the 5S rRNA and the P site tRNA. Forms a bridge to the 30S subunit in the 70S ribosome.

Functionally, this is one of the proteins that bind and probably mediate the attachment of the 5S RNA into the large ribosomal subunit, where it forms part of the central protuberance. In the 70S ribosome it contacts protein S13 of the 30S subunit (bridge B1b), connecting the 2 subunits; this bridge is implicated in subunit movement. Contacts the P site tRNA; the 5S rRNA and some of its associated proteins might help stabilize positioning of ribosome-bound tRNAs. This Solidesulfovibrio magneticus (strain ATCC 700980 / DSM 13731 / RS-1) (Desulfovibrio magneticus) protein is Large ribosomal subunit protein uL5.